The chain runs to 639 residues: MAU2 chromatid cohesion factor homolog (639 aa).

2 TPR repeats span residues 453 to 486 (GGFY…ANAE) and 493 to 526 (SCSL…ASKI).

It belongs to the SCC4/mau-2 family. As to quaternary structure, interacts with Nipped-B to form the cohesin loading complex.

Its subcellular location is the nucleus. It localises to the nucleoplasm. Required for association of the cohesin complex with chromatin during interphase. Plays a role in sister chromatid cohesion and normal progression through prometaphase. The protein is MAU2 chromatid cohesion factor homolog of Drosophila ananassae (Fruit fly).